A 41-amino-acid chain; its full sequence is Large ribosomal subunit protein bL36 (41 aa).

It belongs to the bacterial ribosomal protein bL36 family.

This is Large ribosomal subunit protein bL36 from Xanthobacter autotrophicus (strain ATCC BAA-1158 / Py2).